The chain runs to 190 residues: MAFIAKSFYDLSAISLDGEKVDFNTFRGRAVLIENVASLUGTTTRDFTQLNELQCRFPRRLVVLGFPCNQFGHQENCQNEEILNSLKYVRPGSGYQPTFTLVQKCEVNGQNEHPVFAYLKDKLPYPYDDPFSLMTDPKLIIWSPVRRSDVAWNFEKFLIGPEGEPFRRYSRTFPTINIEPDIKRLLKVAI.

Residue Sec-40 is part of the active site. A non-standard amino acid (selenocysteine) is located at residue Sec-40.

It belongs to the glutathione peroxidase family. As to quaternary structure, homotetramer.

The protein resides in the cytoplasm. It localises to the cytosol. It catalyses the reaction 2 glutathione + H2O2 = glutathione disulfide + 2 H2O. The enzyme catalyses a hydroperoxy polyunsaturated fatty acid + 2 glutathione = a hydroxy polyunsaturated fatty acid + glutathione disulfide + H2O. It carries out the reaction tert-butyl hydroperoxide + 2 glutathione = tert-butanol + glutathione disulfide + H2O. The catalysed reaction is cumene hydroperoxide + 2 glutathione = 2-phenylpropan-2-ol + glutathione disulfide + H2O. It catalyses the reaction (13S)-hydroperoxy-(9Z,11E)-octadecadienoate + 2 glutathione = (13S)-hydroxy-(9Z,11E)-octadecadienoate + glutathione disulfide + H2O. The enzyme catalyses (5S)-hydroperoxy-(6E,8Z,11Z,14Z)-eicosatetraenoate + 2 glutathione = (5S)-hydroxy-(6E,8Z,11Z,14Z)-eicosatetraenoate + glutathione disulfide + H2O. It carries out the reaction (12R)-hydroperoxy-(5Z,8Z,10E,14Z)-eicosatetraenoate + 2 glutathione = (12R)-hydroxy-(5Z,8Z,10E,14Z)-eicosatetraenoate + glutathione disulfide + H2O. The catalysed reaction is (15S)-hydroperoxy-(5Z,8Z,11Z,13E)-eicosatetraenoate + 2 glutathione = (15S)-hydroxy-(5Z,8Z,11Z,13E)-eicosatetraenoate + glutathione disulfide + H2O. Its function is as follows. Catalyzes the reduction of hydroperoxides in a glutathione-dependent manner thus regulating cellular redox homeostasis. Can reduce small soluble hydroperoxides such as H2O2, cumene hydroperoxide and tert-butyl hydroperoxide, as well as several fatty acid-derived hydroperoxides. Cannot reduce phosphatidycholine hydroperoxide. The chain is Glutathione peroxidase 2 (GPX2) from Pongo pygmaeus (Bornean orangutan).